The sequence spans 414 residues: 2,3-diketo-5-methylthiopentyl-1-phosphate enolase (414 aa).

The Proton acceptor role is filled by Lys-99. Substrate is bound by residues Lys-148, 174–177 (KDDE), His-265, Gly-338, and 360–361 (GG). Mg(2+)-binding residues include Lys-174, Asp-176, and Glu-177. Lys-174 bears the N6-carboxylysine mark.

Belongs to the RuBisCO large chain family. Type IV subfamily. In terms of assembly, homodimer. Mg(2+) serves as cofactor.

It carries out the reaction 5-methylsulfanyl-2,3-dioxopentyl phosphate = 2-hydroxy-5-methylsulfanyl-3-oxopent-1-enyl phosphate. Its pathway is amino-acid biosynthesis; L-methionine biosynthesis via salvage pathway; L-methionine from S-methyl-5-thio-alpha-D-ribose 1-phosphate: step 3/6. Its function is as follows. Catalyzes the enolization of 2,3-diketo-5-methylthiopentyl-1-phosphate (DK-MTP-1-P) into 2-hydroxy-3-keto-5-methylthiopentenyl-1-phosphate (HK-MTPenyl-1-P). The protein is 2,3-diketo-5-methylthiopentyl-1-phosphate enolase of Bacillus cereus (strain Q1).